Reading from the N-terminus, the 393-residue chain is MPKKKPTPIQLNPAPDGSAVNGTSSAETNLEALQKKLEELELDEQQRKRLEAFLTQKQKVGELKDDDFEKISELGAGNGGVVFKVSHKPSGLVMARKLIHLEIKPAIRNQIIRELQVLHECNSPYIVGFYGAFYSDGEISICMEHMDGGSLDQVLKKAGRIPEQILGKVSIAVIKGLTYLREKHKIMHRDVKPSNILVNSRGEIKLCDFGVSGQLIDSMANSFVGTRSYMSPERLQGTHYSVQSDIWSMGLSLVEMAVGRYPIPPPDAKELELMFGCQVEGDAAETPPRPRTPGRPLSSYGMDSRPPMAIFELLDYIVNEPPPKLPSGVFSLEFQDFVNKCLIKNPAERADLKQLMVHAFIKRSDAEEVDFAGWLCSTIGLNQPSTPTHAAGV.

A disordered region spans residues 1 to 27 (MPKKKPTPIQLNPAPDGSAVNGTSSAE). The region spanning 68–361 (FEKISELGAG…LKQLMVHAFI (294 aa)) is the Protein kinase domain. ATP-binding positions include 74–82 (LGAGNGGVV), Lys97, 143–146 (MEHM), and 150–153 (SLDQ). Lys97 serves as a coordination point for U0126. 144–146 (EHM) serves as a coordination point for K-252a. Residue Asp190 is the Proton acceptor of the active site. Residues 192–195 (KPSN) and Asp208 each bind ATP. Ser194 contacts K-252a. Residue 208–211 (DFGV) participates in U0126 binding. Residues Ser218 and Ser222 each carry the phosphoserine; by BRAF and RAF1 modification. The tract at residues 270–307 (ELELMFGCQVEGDAAETPPRPRTPGRPLSSYGMDSRPP) is RAF1-binding. Phosphothreonine is present on Thr286. Phosphothreonine; by MAPK1 is present on Thr292. Ser298 carries the post-translational modification Phosphoserine; by PAK.

The protein belongs to the protein kinase superfamily. STE Ser/Thr protein kinase family. MAP kinase kinase subfamily. In terms of assembly, found in a complex with at least BRAF, HRAS, MAP2K1, MAPK3/ERK1 and RGS14. Forms a heterodimer with MAP2K2/MEK2. Forms heterodimers with KSR2 which further dimerize to form tetramers. Interacts with KSR1 or KSR2 and BRAF; the interaction with KSR1 or KSR2 mediates KSR1-BRAF or KSR2-BRAF dimerization. Interacts with ARBB2, LAMTOR3 and RAF1. Interacts with MAPK1/ERK2. Interacts with MORG1. Interacts with PPARG. Interacts with isoform 1 of VRK2. Interacts with SGK1. Interacts with BIRC6/bruce. Interacts with KAT7; the interaction promotes KAT7 phosphorylation. Interacts with RAF1 and NEK10; the interaction is required for ERK1/2-signaling pathway activation in response to UV irradiation. Interacts with TRAF3IP3. Interacts with MOS. As to quaternary structure, (Microbial infection) Interacts with Yersinia YopJ. Phosphorylation at Ser-218 and Ser-222 by MAP kinase kinase kinases (BRAF or MEKK1) positively regulates kinase activity. Also phosphorylated at Thr-292 by MAPK1/ERK2 and at Ser-298 by PAK. MAPK1/ERK2 phosphorylation of Thr-292 occurs in response to cellular adhesion and leads to inhibition of Ser-298 phosphorylation by PAK. Autophosphorylated at Ser-218 and Ser-222, autophosphosphorylation is promoted by NEK10 following UV irradiation. Post-translationally, (Microbial infection) Acetylation by Yersinia YopJ prevents phosphorylation and activation, thus blocking the MAPK signaling pathway. In terms of tissue distribution, widely expressed, with extremely low levels in brain.

Its subcellular location is the cytoplasm. It localises to the cytoskeleton. The protein resides in the microtubule organizing center. The protein localises to the centrosome. It is found in the spindle pole body. Its subcellular location is the nucleus. It localises to the membrane. The enzyme catalyses L-seryl-[protein] + ATP = O-phospho-L-seryl-[protein] + ADP + H(+). It catalyses the reaction L-threonyl-[protein] + ATP = O-phospho-L-threonyl-[protein] + ADP + H(+). The catalysed reaction is L-tyrosyl-[protein] + ATP = O-phospho-L-tyrosyl-[protein] + ADP + H(+). With respect to regulation, ras proteins such as HRAS mediate the activation of RAF proteins such as RAF1 or BRAF which in turn activate extracellular signal-regulated kinases (ERK) through MAPK (mitogen-activated protein kinases) and ERK kinases MAP2K1/MEK1 and MAP2K2/MEK2. Activation occurs through phosphorylation of Ser-218 and Ser-222. MAP2K1/MEK1 binds KSR1 or KSR2 releasing the inhibitory intramolecular interaction between KSR1 or KSR2 protein kinase and N-terminal domains. This allows KSR1 or KSR2 dimerization with BRAF leading to BRAF activation and phosphorylation of MAP2K1. MAP2K1/MEK1 is also the target of negative feed-back regulation by its substrate kinases, such as MAPK1/ERK2. These phosphorylate MAP2K1/MEK1 on Thr-292, thereby facilitating dephosphorylation of the activating residues Ser-218 and Ser-222. Inhibited by serine/threonine phosphatase 2A. Many inhibitors have been identified including pyrrole derivatives, TAK-733 (one of a series of 8-methylpyrido[2,3-d]pyrimidine-4,7(3H,8H)-dione derivatives), CH4987655 and RDEA119/BAY 869766. Dual specificity protein kinase which acts as an essential component of the MAP kinase signal transduction pathway. Binding of extracellular ligands such as growth factors, cytokines and hormones to their cell-surface receptors activates RAS and this initiates RAF1 activation. RAF1 then further activates the dual-specificity protein kinases MAP2K1/MEK1 and MAP2K2/MEK2. Both MAP2K1/MEK1 and MAP2K2/MEK2 function specifically in the MAPK/ERK cascade, and catalyze the concomitant phosphorylation of a threonine and a tyrosine residue in a Thr-Glu-Tyr sequence located in the extracellular signal-regulated kinases MAPK3/ERK1 and MAPK1/ERK2, leading to their activation and further transduction of the signal within the MAPK/ERK cascade. Activates BRAF in a KSR1 or KSR2-dependent manner; by binding to KSR1 or KSR2 releases the inhibitory intramolecular interaction between KSR1 or KSR2 protein kinase and N-terminal domains which promotes KSR1 or KSR2-BRAF dimerization and BRAF activation. Depending on the cellular context, this pathway mediates diverse biological functions such as cell growth, adhesion, survival and differentiation, predominantly through the regulation of transcription, metabolism and cytoskeletal rearrangements. One target of the MAPK/ERK cascade is peroxisome proliferator-activated receptor gamma (PPARG), a nuclear receptor that promotes differentiation and apoptosis. MAP2K1/MEK1 has been shown to export PPARG from the nucleus. The MAPK/ERK cascade is also involved in the regulation of endosomal dynamics, including lysosome processing and endosome cycling through the perinuclear recycling compartment (PNRC), as well as in the fragmentation of the Golgi apparatus during mitosis. The protein is Dual specificity mitogen-activated protein kinase kinase 1 of Homo sapiens (Human).